Here is a 525-residue protein sequence, read N- to C-terminus: GMP synthase [glutamine-hydrolyzing] (525 aa).

The 199-residue stretch at 9-207 folds into the Glutamine amidotransferase type-1 domain; sequence RILILDFGSQ…VKEICHCEAL (199 aa). The Nucleophile role is filled by Cys86. Active-site residues include His181 and Glu183. The GMPS ATP-PPase domain maps to 208-400; sequence WTPATIIEDA…LGLPYNMLYR (193 aa). 235–241 contacts ATP; sequence SGGVDSS.

Homodimer.

It carries out the reaction XMP + L-glutamine + ATP + H2O = GMP + L-glutamate + AMP + diphosphate + 2 H(+). It participates in purine metabolism; GMP biosynthesis; GMP from XMP (L-Gln route): step 1/1. Catalyzes the synthesis of GMP from XMP. The polypeptide is GMP synthase [glutamine-hydrolyzing] (Tolumonas auensis (strain DSM 9187 / NBRC 110442 / TA 4)).